Reading from the N-terminus, the 112-residue chain is Small ribosomal subunit protein bS6 (112 aa).

This sequence belongs to the bacterial ribosomal protein bS6 family.

Its function is as follows. Binds together with bS18 to 16S ribosomal RNA. In Legionella pneumophila (strain Paris), this protein is Small ribosomal subunit protein bS6.